The primary structure comprises 394 residues: Maltose permease (394 aa).

Over 1 to 11 the chain is Cytoplasmic; the sequence is MGAAFKWGAAA. The helical transmembrane segment at 12 to 38 threads the bilayer; the sequence is RKTVFPLFYFLIFFAFGALFPLLSVYL. At 39–45 the chain is on the extracellular side; the sequence is QEEARLS. Residues 46-74 form a helical membrane-spanning segment; that stretch reads GAAIGWIMSLPPIVTMAAQPLWGTAADYT. The Cytoplasmic segment spans residues 75–78; that stretch reads RKPV. Residues 79–104 form a helical membrane-spanning segment; the sequence is GLLLAALVLAALFGVMYALAGSYRLF. The Extracellular segment spans residues 105–108; sequence VVLT. Residues 109–126 form a helical membrane-spanning segment; that stretch reads VLLSAMQSAIVPLSDSLA. At 127–137 the chain is on the cytoplasmic side; it reads LRHVHEQGGNY. Residues 138-160 form a helical membrane-spanning segment; it reads GAIRLWGSLGFAMAVLAVGWLSD. The Extracellular segment spans residues 161–163; sequence HIA. Residues 164–183 form a helical membrane-spanning segment; sequence FAVIFYAFSLALLTAAALAT. Topologically, residues 184 to 213 are cytoplasmic; sequence RLPRYPMGAPGALTRQDVRGLLASRPFRLL. Residues 214–233 form a helical membrane-spanning segment; it reads LVATFLLFGPILANNSYFGL. Residues 234–237 lie on the Extracellular side of the membrane; sequence LIHE. The helical transmembrane segment at 238-262 threads the bilayer; sequence LGGTLTGIGLAFLFAAGSEAPFMKA. Topologically, residues 263-272 are cytoplasmic; sequence ADRLIGRFGM. A helical membrane pass occupies residues 273–292; the sequence is VRLLLLAALISAARWLAYAA. The Extracellular segment spans residues 293 to 295; the sequence is DPP. The helical transmembrane segment at 296-318 threads the bilayer; the sequence is LWFVYMTTVVQGCSVGLAIPTAL. At 319 to 330 the chain is on the cytoplasmic side; the sequence is QYARRLAPERVQ. Residues 331–358 traverse the membrane as a helical segment; that stretch reads STAVALYSAVGNGLGAWFCTLVGGYLLE. Over 359 to 361 the chain is Extracellular; sequence RWQ. Residues 362–382 traverse the membrane as a helical segment; that stretch reads IGAVYLFFSICTIVGVLVLLL. Residues 383–394 lie on the Cytoplasmic side of the membrane; it reads LAKRERTAGEEK.

It belongs to the major facilitator superfamily.

The protein localises to the cell membrane. In terms of biological role, high affinity transport of maltose. This chain is Maltose permease (malA), found in Geobacillus stearothermophilus (Bacillus stearothermophilus).